A 132-amino-acid chain; its full sequence is Small ribosomal subunit protein uS8 (132 aa).

Belongs to the universal ribosomal protein uS8 family. As to quaternary structure, part of the 30S ribosomal subunit. Contacts proteins S5 and S12.

Functionally, one of the primary rRNA binding proteins, it binds directly to 16S rRNA central domain where it helps coordinate assembly of the platform of the 30S subunit. This chain is Small ribosomal subunit protein uS8, found in Nocardia farcinica (strain IFM 10152).